Here is a 457-residue protein sequence, read N- to C-terminus: UPF0210 protein Sfum_2948 (457 aa).

The protein belongs to the UPF0210 family. As to quaternary structure, homodimer.

The protein is UPF0210 protein Sfum_2948 of Syntrophobacter fumaroxidans (strain DSM 10017 / MPOB).